Consider the following 347-residue polypeptide: Neutral protease 2 homolog MGG_10927 (347 aa).

The first 19 residues, 1 to 19, serve as a signal peptide directing secretion; sequence MKYSVGITALLATLAQGAA. A propeptide spanning residues 20-176 is cleaved from the precursor; the sequence is VMSKRDIPLD…RSYLAKRTMV (157 aa). Disulfide bonds link cysteine 180-cysteine 250 and cysteine 257-cysteine 275. Position 299 (histidine 299) interacts with Zn(2+). Glutamate 300 is an active-site residue. Residue histidine 303 participates in Zn(2+) binding.

The protein belongs to the peptidase M35 family. The cofactor is Zn(2+).

The protein localises to the secreted. It carries out the reaction Preferential cleavage of bonds with hydrophobic residues in P1'. Also 3-Asn-|-Gln-4 and 8-Gly-|-Ser-9 bonds in insulin B chain.. Its function is as follows. Secreted metalloproteinase that allows assimilation of proteinaceous substrates. Shows high activities on basic nuclear substrates such as histone and protamine. This Pyricularia oryzae (strain 70-15 / ATCC MYA-4617 / FGSC 8958) (Rice blast fungus) protein is Neutral protease 2 homolog MGG_10927.